Consider the following 330-residue polypeptide: MAWTLLHSKLHQNLQRRFPELQGTRILVAVSGGQDSLCLLHLLNDLTKQWQWHLAVAHCDHRWPTDAGIADHVQGLAQGYKLPYFQRDAQDLPQTEAAARHWRYHALTAIAKAENFPVVMTGHTQSDRAETLLFNLVRGSGSDGLQAMNWVRNLEESGSDKSPIRLIRPLLEISRQETGDFCQQQQLSVWEDVLNEKLTYRRNRIRGELIPYLKKHFNPQVEKSLAQTVELLTAEVAYLEQVSGEIYQTLSQTDQKSLNCRLLSQKPLALQRRIIRQFLQSCQSQSPNFEEIEQIVGLINAPNRSQTSSLPGQGIVRVEGDFLRYIYQGK.

31-36 lines the ATP pocket; the sequence is SGGQDS.

This sequence belongs to the tRNA(Ile)-lysidine synthase family.

The protein localises to the cytoplasm. It carries out the reaction cytidine(34) in tRNA(Ile2) + L-lysine + ATP = lysidine(34) in tRNA(Ile2) + AMP + diphosphate + H(+). Functionally, ligates lysine onto the cytidine present at position 34 of the AUA codon-specific tRNA(Ile) that contains the anticodon CAU, in an ATP-dependent manner. Cytidine is converted to lysidine, thus changing the amino acid specificity of the tRNA from methionine to isoleucine. The polypeptide is tRNA(Ile)-lysidine synthase (Synechocystis sp. (strain ATCC 27184 / PCC 6803 / Kazusa)).